The chain runs to 134 residues: Small ribosomal subunit protein uS8c (134 aa).

It belongs to the universal ribosomal protein uS8 family. In terms of assembly, part of the 30S ribosomal subunit.

It is found in the plastid. Its subcellular location is the chloroplast. Functionally, one of the primary rRNA binding proteins, it binds directly to 16S rRNA central domain where it helps coordinate assembly of the platform of the 30S subunit. This Coffea arabica (Arabian coffee) protein is Small ribosomal subunit protein uS8c (rps8).